We begin with the raw amino-acid sequence, 729 residues long: Catalase-peroxidase (729 aa).

Residues 1–26 (MTMDQKTDNAGKCPVAHTAPRGRSNR) form a disordered region. The segment at residues 97-219 (WHSAGTYRIT…LAAVQMGLIY (123 aa)) is a cross-link (tryptophyl-tyrosyl-methioninium (Trp-Tyr) (with M-245)). His98 serves as the catalytic Proton acceptor. Positions 219–245 (YVNPEGPNGNPDPVAAAHDIRETFARM) form a cross-link, tryptophyl-tyrosyl-methioninium (Tyr-Met) (with W-97). His260 is a heme b binding site.

The protein belongs to the peroxidase family. Peroxidase/catalase subfamily. In terms of assembly, homodimer or homotetramer. It depends on heme b as a cofactor. In terms of processing, formation of the three residue Trp-Tyr-Met cross-link is important for the catalase, but not the peroxidase activity of the enzyme.

The catalysed reaction is H2O2 + AH2 = A + 2 H2O. The enzyme catalyses 2 H2O2 = O2 + 2 H2O. Its function is as follows. Bifunctional enzyme with both catalase and broad-spectrum peroxidase activity. The sequence is that of Catalase-peroxidase from Sinorhizobium medicae (strain WSM419) (Ensifer medicae).